A 271-amino-acid chain; its full sequence is RxLR effector protein PITG_15679 (271 aa).

A signal peptide spans 1–18; it reads MKVLQLIALTALVSSCVA. Positions 49-69 match the RxLR-dEER motif; the sequence is RSLRRYDLEGLDSVNSNREER. The region spanning 212-271 is the Nudix hydrolase domain; it reads RLLSANVVMRLNDKGEKQILLISSSNPKKGDFLLPKGGWDKGEDVKKAALREVIEEGGVR. A Nudix box motif is present at residues 248 to 269; that stretch reads GGWDKGEDVKKAALREVIEEGG.

The protein in the N-terminal section; belongs to the RxLR effector family. It in the C-terminal section; belongs to the Nudix hydrolase family.

The protein localises to the secreted. Its subcellular location is the host cytoplasm. It localises to the host nucleus. Functionally, effector that enhances P.infestans colonization of Nicotiana benthamiana leaves. In Phytophthora infestans (strain T30-4) (Potato late blight agent), this protein is RxLR effector protein PITG_15679.